The primary structure comprises 24 residues: Brevinin-1La (24 aa).

Cysteines 18 and 24 form a disulfide.

Expressed by the skin glands.

It localises to the secreted. Its function is as follows. Antibacterial activity against Gram-positive bacterium S.aureus and Gram-negative bacterium E.coli. In Rana luteiventris (Columbia spotted frog), this protein is Brevinin-1La.